The chain runs to 740 residues: Probable RNA-dependent RNA polymerase 1 (740 aa).

It belongs to the RdRP family.

It carries out the reaction RNA(n) + a ribonucleoside 5'-triphosphate = RNA(n+1) + diphosphate. In terms of biological role, probably involved in the RNA silencing pathway and required for the generation of small interfering RNAs (siRNAs). This is Probable RNA-dependent RNA polymerase 1 (RDR1) from Oryza sativa subsp. japonica (Rice).